A 102-amino-acid chain; its full sequence is NADH-quinone oxidoreductase subunit K (102 aa).

Transmembrane regions (helical) follow at residues 6-26 (LEHG…GVMV), 30-50 (LLFM…AFVL), and 62-82 (VMFI…LAIV).

Belongs to the complex I subunit 4L family. NDH-1 is composed of 14 different subunits. Subunits NuoA, H, J, K, L, M, N constitute the membrane sector of the complex.

It is found in the cell inner membrane. The catalysed reaction is a quinone + NADH + 5 H(+)(in) = a quinol + NAD(+) + 4 H(+)(out). Its function is as follows. NDH-1 shuttles electrons from NADH, via FMN and iron-sulfur (Fe-S) centers, to quinones in the respiratory chain. The immediate electron acceptor for the enzyme in this species is believed to be ubiquinone. Couples the redox reaction to proton translocation (for every two electrons transferred, four hydrogen ions are translocated across the cytoplasmic membrane), and thus conserves the redox energy in a proton gradient. This is NADH-quinone oxidoreductase subunit K from Acinetobacter baumannii (strain AB307-0294).